The following is a 223-amino-acid chain: Putative synaptogyrin-2 like protein (223 aa).

The residue at position 1 (M1) is an N-acetylmethionine. S3 carries the phosphoserine modification. The MARVEL domain occupies 20 to 170 (FLTQPQVVAR…LASLTYQRYK (151 aa)). A run of 4 helical transmembrane segments spans residues 26–46 (VVAR…IYGE), 71–91 (GSAI…DAYF), 104–124 (VIGD…GFCF), and 146–166 (AAIT…SLTY). Residues 197–223 (ASVDNYQQPPFTQNAETTEGYQPPPVY) are disordered. Residues 200-216 (DNYQQPPFTQNAETTEG) are compositionally biased toward polar residues.

It belongs to the synaptogyrin family.

It is found in the membrane. The chain is Putative synaptogyrin-2 like protein from Homo sapiens (Human).